A 417-amino-acid polypeptide reads, in one-letter code: Protein FAM181B (417 aa).

The disordered stretch occupies residues cysteine 104–glutamate 147.

Belongs to the FAM181 family.

This Mus musculus (Mouse) protein is Protein FAM181B (Fam181b).